We begin with the raw amino-acid sequence, 1073 residues long: Activated Cdc42 kinase Ack (1073 aa).

The tract at residues 88–110 (IGGGKQPSSKKQSSAARESSQGN) is disordered. Positions 123–383 (ITMGLKLGDG…PTFAALKEYL (261 aa)) constitute a Protein kinase domain. Residues 129 to 137 (LGDGSFGVV) and K156 contribute to the ATP site. Catalysis depends on D250, which acts as the Proton acceptor. An SH3 domain is found at 386–446 (MSPPVMRASR…PRNLLEQRKV (61 aa)). 3 disordered regions span residues 484–506 (QRKC…SSKQ), 803–834 (PLKN…VEAA), and 862–882 (AQPP…HQQQ). Positions 812–826 (SVHSNHSSPSSTASP) are enriched in low complexity. Positions 1029 to 1072 (GLATRHYKIDQLARLGVAGRPQCEQALQQTNWSLEVAAELLLNA) constitute a UBA domain.

It belongs to the protein kinase superfamily. Tyr protein kinase family. As to quaternary structure, interacts with yki and ex. Interacts with drk. Likely to be a member of an axonal guidance receptor complex that includes SH3PX1, dock and Dscam. Interacts (via N-terminus) with dock. Interacts with SH3PX1 (via SH3 domain). Mg(2+) is required as a cofactor. In terms of processing, phosphorylated. Autophosphorylated. In terms of tissue distribution, detected in ovaries (at protein level). In adults, relatively higher expression in the head compared to the body.

It localises to the cytoplasm. The protein resides in the cytoplasmic vesicle. Its subcellular location is the clathrin-coated vesicle. The enzyme catalyses L-tyrosyl-[protein] + ATP = O-phospho-L-tyrosyl-[protein] + ADP + H(+). It carries out the reaction L-threonyl-[protein] + ATP = O-phospho-L-threonyl-[protein] + ADP + H(+). In terms of biological role, non-receptor tyrosine-protein and serine/threonine-protein kinase that is implicated in diverse biological functions such as cell survival, cell differentiation, cell growth and proliferation. Phosphorylates SH3PX1 and ex. Phosphorylates SH3PX1 predominantly on 'Tyr-56', which likely promotes the recruitment of SH3PX1 to an axonal guidance receptor complex that includes dock and Dscam; because phosphorylation of SH3PX1 increases its interaction with the complex member dock while decreasing its interaction with the actin cytoskeleton modulator WASp. In the wing and eye, promotes tissue growth, and during embryogenesis coordinates cell shape changes required for correct dorsal closure. Functions in the negative regulation of the Hippo/SWH (Sav/Wts/Hpo) signaling pathway by enhancing yki activity thereby promoting cell proliferation and inhibiting apoptosis. This is accomplished, at least in part, by phosphorylating ex thereby reducing its ability to efficiently activate the Hippo signaling cascade. In the eye disk, wing disk and possibly spermatids, inhibits programmed cell death induced by hid and rpr through a mechanism that is independent of the MAP kinase signal transduction pathway. Essential for male and female fertility. During oogenesis required for the correct temporal assembly, and consequently the catalytic activity of long Ctps filaments (cytoophidium) in the germline nurse cells, likely by phosphorylating an unidentified substrate that is essential for linking individual Ctps filaments into large, catalytically active assemblies. In Drosophila melanogaster (Fruit fly), this protein is Activated Cdc42 kinase Ack.